The primary structure comprises 354 residues: S-adenosylmethionine:tRNA ribosyltransferase-isomerase (354 aa).

Belongs to the QueA family. Monomer.

It localises to the cytoplasm. The catalysed reaction is 7-aminomethyl-7-carbaguanosine(34) in tRNA + S-adenosyl-L-methionine = epoxyqueuosine(34) in tRNA + adenine + L-methionine + 2 H(+). The protein operates within tRNA modification; tRNA-queuosine biosynthesis. Transfers and isomerizes the ribose moiety from AdoMet to the 7-aminomethyl group of 7-deazaguanine (preQ1-tRNA) to give epoxyqueuosine (oQ-tRNA). This Methylobacterium radiotolerans (strain ATCC 27329 / DSM 1819 / JCM 2831 / NBRC 15690 / NCIMB 10815 / 0-1) protein is S-adenosylmethionine:tRNA ribosyltransferase-isomerase.